Consider the following 106-residue polypeptide: UPF0145 protein Pfl01_1745 (106 aa).

It belongs to the UPF0145 family.

The protein is UPF0145 protein Pfl01_1745 of Pseudomonas fluorescens (strain Pf0-1).